The following is a 98-amino-acid chain: Small ribosomal subunit protein bS6 (98 aa).

It belongs to the bacterial ribosomal protein bS6 family.

Functionally, binds together with bS18 to 16S ribosomal RNA. The polypeptide is Small ribosomal subunit protein bS6 (Levilactobacillus brevis (strain ATCC 367 / BCRC 12310 / CIP 105137 / JCM 1170 / LMG 11437 / NCIMB 947 / NCTC 947) (Lactobacillus brevis)).